Here is a 307-residue protein sequence, read N- to C-terminus: MNHQTQTLSLEHFVSLEELSNQEVMSLIKRSIEVKENPSNIGFDKDYYVSNLFFENSTRTHKSFEMAELKLGLKTIEFNADTSSVNKGETLYDTILTMSALGLDVCVIRHPDIDYYKELIASPNIHSAIVNGGDGSGQHPSQSLLDLVTIYEEFGYFKGLKIAIVGDLTHSRVAKSNMQVLKRLGAEIFFSGPKEWYSSQFDEYGQYLPIDQLVDQIDVLMLLRVQHERHDGKGVFSKESYHQQFGLTKERYKHLRDTAIIMHPAPVNRDVEIASDLVEADKARIVKQMSNGVYARIAILEAVLNSR.

Carbamoyl phosphate is bound by residues Arg-59 and Thr-60. Lys-87 provides a ligand contact to L-aspartate. Carbamoyl phosphate is bound by residues Arg-109, His-139, and Gln-142. Residues Arg-172 and Arg-224 each coordinate L-aspartate. Ala-265 and Pro-266 together coordinate carbamoyl phosphate.

Belongs to the aspartate/ornithine carbamoyltransferase superfamily. ATCase family. Heterododecamer (2C3:3R2) of six catalytic PyrB chains organized as two trimers (C3), and six regulatory PyrI chains organized as three dimers (R2).

The enzyme catalyses carbamoyl phosphate + L-aspartate = N-carbamoyl-L-aspartate + phosphate + H(+). The protein operates within pyrimidine metabolism; UMP biosynthesis via de novo pathway; (S)-dihydroorotate from bicarbonate: step 2/3. Its function is as follows. Catalyzes the condensation of carbamoyl phosphate and aspartate to form carbamoyl aspartate and inorganic phosphate, the committed step in the de novo pyrimidine nucleotide biosynthesis pathway. This chain is Aspartate carbamoyltransferase catalytic subunit, found in Streptococcus agalactiae serotype Ia (strain ATCC 27591 / A909 / CDC SS700).